A 941-amino-acid polypeptide reads, in one-letter code: Bifunctional glutamine synthetase adenylyltransferase/adenylyl-removing enzyme (941 aa).

Positions 1–437 are adenylyl removase; that stretch reads MSIPTASLSP…TAEFAELLAP (437 aa). Residues 444–941 form an adenylyl transferase region; the sequence is PDTLADYWRA…FPLGKDEAAL (498 aa).

Belongs to the GlnE family. Mg(2+) is required as a cofactor.

The catalysed reaction is [glutamine synthetase]-O(4)-(5'-adenylyl)-L-tyrosine + phosphate = [glutamine synthetase]-L-tyrosine + ADP. It catalyses the reaction [glutamine synthetase]-L-tyrosine + ATP = [glutamine synthetase]-O(4)-(5'-adenylyl)-L-tyrosine + diphosphate. In terms of biological role, involved in the regulation of glutamine synthetase GlnA, a key enzyme in the process to assimilate ammonia. When cellular nitrogen levels are high, the C-terminal adenylyl transferase (AT) inactivates GlnA by covalent transfer of an adenylyl group from ATP to specific tyrosine residue of GlnA, thus reducing its activity. Conversely, when nitrogen levels are low, the N-terminal adenylyl removase (AR) activates GlnA by removing the adenylyl group by phosphorolysis, increasing its activity. The regulatory region of GlnE binds the signal transduction protein PII (GlnB) which indicates the nitrogen status of the cell. In Xanthomonas oryzae pv. oryzae (strain MAFF 311018), this protein is Bifunctional glutamine synthetase adenylyltransferase/adenylyl-removing enzyme.